We begin with the raw amino-acid sequence, 320 residues long: GTP 3',8-cyclase (320 aa).

Residues 5-225 form the Radical SAM core domain; that stretch reads QFDRKINYLR…IQLIKKDEKA (221 aa). GTP is bound at residue R14. [4Fe-4S] cluster contacts are provided by C21 and C25. Y27 contacts S-adenosyl-L-methionine. Residue C28 participates in [4Fe-4S] cluster binding. A GTP-binding site is contributed by R64. G68 serves as a coordination point for S-adenosyl-L-methionine. T95 serves as a coordination point for GTP. Residue S119 coordinates S-adenosyl-L-methionine. Residue K155 coordinates GTP. Residue M189 coordinates S-adenosyl-L-methionine. Positions 248 and 251 each coordinate [4Fe-4S] cluster. 253–255 is a GTP binding site; it reads RIR. C265 serves as a coordination point for [4Fe-4S] cluster.

This sequence belongs to the radical SAM superfamily. MoaA family. As to quaternary structure, monomer and homodimer. The cofactor is [4Fe-4S] cluster.

The enzyme catalyses GTP + AH2 + S-adenosyl-L-methionine = (8S)-3',8-cyclo-7,8-dihydroguanosine 5'-triphosphate + 5'-deoxyadenosine + L-methionine + A + H(+). Its pathway is cofactor biosynthesis; molybdopterin biosynthesis. Catalyzes the cyclization of GTP to (8S)-3',8-cyclo-7,8-dihydroguanosine 5'-triphosphate. In Campylobacter jejuni subsp. doylei (strain ATCC BAA-1458 / RM4099 / 269.97), this protein is GTP 3',8-cyclase.